A 433-amino-acid chain; its full sequence is MSLNDDATFWRNARQHLVRYGGTFEPMIIERAKGSFVYDADGRAILDFTSGQMSAVLGHCHPEIVSVIGEYAGKLDHLFSGMLSRPVVDLATRLANITPPGLDRALLLSTGAESNEAAIRMAKLVTGKYEIVGFAQSWHGMTGAAASATYSAGRKGVGPAAVGSFAIPAPFTYRPRFERNGAYDYLAELDYAFDLIDRQSSGNLAAFIAEPILSSGGIIELPDGYMAALKRKCEARGMLLILDEAQTGVGRTGTMFACQRDGVTPDILTLSKTLGAGLPLAAIVTSAAIEERAHELGYLFYTTHVSDPLPAAVGLRVLDVVQRDGLVARANVMGDRLRRGLLDLMERFDCIGDVRGRGLLLGVEIVKDRRTKEPADGLGAKITRECMNLGLSMNIVQLPGMGGVFRIAPPLTVSEDEIDLGLSLLGQAIERAL.

Lys272 carries the post-translational modification N6-(pyridoxal phosphate)lysine.

It belongs to the class-III pyridoxal-phosphate-dependent aminotransferase family. In terms of assembly, homotetramer. It depends on pyridoxal 5'-phosphate as a cofactor.

The enzyme catalyses 2,2-dialkylglycine + pyruvate + H(+) = dialkyl ketone + L-alanine + CO2. In terms of biological role, the dialkylglycine decarboxylase is of interest because it normally catalyzes both decarboxylation and amino transfer. It may be more properly described as a decarboxylating aminotransferase rather than an aminotransferring decarboxylase. This Burkholderia cepacia (Pseudomonas cepacia) protein is 2,2-dialkylglycine decarboxylase (dgdA).